Consider the following 410-residue polypeptide: Neuroserpin (410 aa).

The first 16 residues, 1–16 (MYFLGLLSLLVLPSKA), serve as a signal peptide directing secretion. Residues N157 and N401 are each glycosylated (N-linked (GlcNAc...) asparagine).

The protein belongs to the serpin family. In terms of tissue distribution, detected in embryonic ocular vitreous fluid (at protein level). In the embryo present in retina, brain, cerebellum and spinal cord. In adult, predominantly expressed in the brain.

It is found in the secreted. The protein resides in the cytoplasmic vesicle. It localises to the secretory vesicle lumen. Its subcellular location is the perikaryon. Functionally, serine protease inhibitor that inhibits plasminogen activators and plasmin but not thrombin. May be involved in the formation or reorganization of synaptic connections as well as for synaptic plasticity in the adult nervous system. May protect neurons from cell damage by tissue-type plasminogen activator. This chain is Neuroserpin (SERPINI1), found in Gallus gallus (Chicken).